The sequence spans 176 residues: Adipose-secreted signaling protein (176 aa).

A disordered region spans residues 1 to 30 (MATAGKGSKGKGTGVRFTPEGTQGHPQEGT). Polar residues predominate over residues 20 to 30 (EGTQGHPQEGT).

This sequence belongs to the ADISSP family.

Its function is as follows. May be involved in thermogenesis and glucose homeostasis. The protein is Adipose-secreted signaling protein of Taeniopygia guttata (Zebra finch).